We begin with the raw amino-acid sequence, 517 residues long: FAD-dependent monooxygenase dmxR9 (517 aa).

2 residues coordinate FAD: V96 and R162. Catalysis depends on residues R243 and Y270. FAD-binding residues include D365 and A378.

It belongs to the paxM FAD-dependent monooxygenase family. Requires FAD as cofactor.

It participates in secondary metabolite biosynthesis. FAD-dependent monooxygenase; part of the gene cluster that mediates the biosynthesis of the dimeric xanthones cryptosporioptides. The pathway begins with the synthesis of atrochrysone thioester by the polyketide synthase dmx-nrPKS. The atrochrysone carboxyl ACP thioesterase dmxR1 then breaks the thioester bond and releases the atrochrysone carboxylic acid from dmx-nrPKS. Atrochrysone carboxylic acid is decarboxylated by the decarboxylase dmxR15, and oxidized by the anthrone oxygenase dmxR16 to yield emodin. Emodin is then reduced to emodin hydroquinone by the oxidoreductase dmxR7. A-ring reduction by the short chain dehydrogenase dmxR18, dehydration by the scytalone dehydratase-like protein dmxR17 and probable spontaneous re-oxidation, results in overall deoxygenation to chrysophanol. Baeyer-Villiger oxidation by the Baeyer-Villiger monooxygenase (BVMO) dmxR6 then yields monodictylactone in equilibrium with monodictyphenone. In the case of the cryptosporioptides biosynthesis, monodictylactone is reduced at C-12 to an alcohol (by the short chain dehydrogenases dmxR12 or dmxR8) and hydroxylated at C-5 by dmxR9, yielding the electron-rich aromatic which could eliminate H(2)O to form the ortho-quinonemethide, followed by tautomerisation to paraquinone and complete the formal reduction to produce the 10-methylgroup. Conjugate addition of C-4a-OH to the resulting paraquinone by the monooxygenase dmxR10 then gives cyclohexadienone, which is then reduced at C-5 by the short chain dehydrogenase dmxR3 to give the dihydroxanthone. The 6,7-epoxide in the cryptosporioptides could be introduced by the cytochrome P450 monooxygenase dmxL3. The highly reducing PKS dmxL2 manufactures butyrate, which is further carboxylated by dmxL1 to form ethylmalonate. It is not yet clear whether the carboxylation occurs while the butyrate is attached to the ACP of dmxL2, but this unusual fungal metabolite could then be esterified to O-5 by the O-acetyltransferase dmxR13. Finally, dimerization performed by dmxR5 gives the observed dimers cryptosporioptides A, B and C as the final products of the pathway. This is FAD-dependent monooxygenase dmxR9 from Cryptosporiopsis sp. (strain 8999).